A 161-amino-acid chain; its full sequence is Allophycocyanin subunit alpha 1 (161 aa).

Asn71 is subject to N4-methylasparagine. Cys81 contacts (2R,3E)-phycocyanobilin.

It belongs to the phycobiliprotein family. As to quaternary structure, heterohexamer of two alpha chains, one alpha-B chain and three beta chains. Post-translationally, contains one covalently linked phycocyanobilin chromophore. The chromophore is added by phycocyanobilin lyase CpcS 1.

The protein resides in the cellular thylakoid membrane. Functionally, light-harvesting photosynthetic bile pigment-protein from the phycobiliprotein complex. Allophycocyanin has a maximum absorption at approximately 650 to 653 nanometers. The sequence is that of Allophycocyanin subunit alpha 1 (apcA1) from Nostoc sp. (strain PCC 7120 / SAG 25.82 / UTEX 2576).